Here is a 148-residue protein sequence, read N- to C-terminus: Lysozyme C-1 (148 aa).

The signal sequence occupies residues 1 to 18 (MKALLVLGFLLLSASVQA). The C-type lysozyme domain occupies 19 to 148 (KIYERCQFAR…LSGYIRNCGV (130 aa)). Disulfide bonds link Cys24–Cys146, Cys48–Cys134, Cys83–Cys99, and Cys95–Cys113. Active-site residues include Glu53 and Asp71.

This sequence belongs to the glycosyl hydrolase 22 family. Monomer. As to expression, expressed in lung, small intestine and spleen.

Its subcellular location is the secreted. The enzyme catalyses Hydrolysis of (1-&gt;4)-beta-linkages between N-acetylmuramic acid and N-acetyl-D-glucosamine residues in a peptidoglycan and between N-acetyl-D-glucosamine residues in chitodextrins.. Functionally, lysozymes have primarily a bacteriolytic function; those in tissues and body fluids are associated with the monocyte-macrophage system and enhance the activity of immunoagents. In the intestine they may also have a digestive function. In Rattus norvegicus (Rat), this protein is Lysozyme C-1 (Lyz1).